Reading from the N-terminus, the 270-residue chain is Cell surface glycoprotein CD200 receptor 5 (270 aa).

Residues 1–25 (MHALGRTPALTLLIFINIFVSGSRC) form the signal peptide. Residues 26–241 (TDKNQTIQND…STTTTTSLLT (216 aa)) are Extracellular-facing. The region spanning 39–145 (PLTQVNTTVS…GNFGRVYDLQ (107 aa)) is the Ig-like V-type domain. The N-linked (GlcNAc...) asparagine glycan is linked to Asn-44. Intrachain disulfides connect Cys-59–Cys-129 and Cys-164–Cys-213. In terms of domain architecture, Ig-like C2-type spans 134–229 (PEGNFGRVYD…GNKSLFIELN (96 aa)). N-linked (GlcNAc...) asparagine glycans are attached at residues Asn-192 and Asn-221. A helical membrane pass occupies residues 242–262 (ILYVKMVLLGIILLHVGFAFF). At 263–270 (QKRNVIRT) the chain is on the cytoplasmic side.

It belongs to the CD200R family.

It localises to the membrane. In terms of biological role, may not be a receptor for the CD200/OX2 cell surface glycoprotein. The polypeptide is Cell surface glycoprotein CD200 receptor 5 (Cd200r5) (Mus musculus (Mouse)).